Here is a 410-residue protein sequence, read N- to C-terminus: Metacaspase-1B (410 aa).

The interval 1-106 is disordered; it reads MYHRNSAPPP…SFGKGAPSNY (106 aa). Pro residues-rich tracts occupy residues 7–23 and 32–52; these read APPP…PQSQ and PPYP…PPPT. Active-site residues include His-201 and Cys-257.

The protein belongs to the peptidase C14B family.

Functionally, involved in cell death (apoptosis). This is Metacaspase-1B (casB) from Aspergillus clavatus (strain ATCC 1007 / CBS 513.65 / DSM 816 / NCTC 3887 / NRRL 1 / QM 1276 / 107).